The following is a 287-amino-acid chain: Bifunctional protein FolD (287 aa).

NADP(+)-binding positions include 165–167 (GRS), serine 190, and isoleucine 231.

It belongs to the tetrahydrofolate dehydrogenase/cyclohydrolase family. In terms of assembly, homodimer.

It catalyses the reaction (6R)-5,10-methylene-5,6,7,8-tetrahydrofolate + NADP(+) = (6R)-5,10-methenyltetrahydrofolate + NADPH. The enzyme catalyses (6R)-5,10-methenyltetrahydrofolate + H2O = (6R)-10-formyltetrahydrofolate + H(+). It functions in the pathway one-carbon metabolism; tetrahydrofolate interconversion. Functionally, catalyzes the oxidation of 5,10-methylenetetrahydrofolate to 5,10-methenyltetrahydrofolate and then the hydrolysis of 5,10-methenyltetrahydrofolate to 10-formyltetrahydrofolate. This is Bifunctional protein FolD from Trichodesmium erythraeum (strain IMS101).